Consider the following 512-residue polypeptide: Sugar transport protein MST7 (512 aa).

Over 1–17 (MENAGAGDGAPKHYPGK) the chain is Cytoplasmic. The chain crosses the membrane as a helical span at residues 18–38 (MTVFVFIACLVASSGGLIFGY). The Extracellular portion of the chain corresponds to 39–81 (DIGISGGVTSMDPFLSRFFPSVYAKEKEVVDTNQYCKFDSEPL). The chain crosses the membrane as a helical span at residues 82-102 (TLFTSSLYLAALIASLFASVI). At 103-116 (TRKLGRKMTMLGGG) the chain is on the cytoplasmic side. The helical transmembrane segment at 117 to 137 (FIFLIGAVLNGAAVNVAMLII) threads the bilayer. Over 138–139 (GR) the chain is Extracellular. Residues 140–160 (ILLGIGVGFSIQAVPLYLSEM) form a helical membrane-spanning segment. Residues 161 to 166 (APAKMR) are Cytoplasmic-facing. A helical membrane pass occupies residues 167–187 (GMLNIIFQLMITVGILFANLI). The Extracellular portion of the chain corresponds to 188 to 201 (NYFTDKIAGGWGWR). The chain crosses the membrane as a helical span at residues 202-222 (VSLGLAAVPAVIMTVGSILLP). At 223-294 (DTPNSLLSRG…MSVLIPTLQQ (72 aa)) the chain is on the cytoplasmic side. The chain crosses the membrane as a helical span at residues 295-315 (LTGINVVMFYAPVLFKTIGFG). Residues 316–320 (GTASL) are Extracellular-facing. A helical membrane pass occupies residues 321-341 (MSAVITGLVNMFATFVSIATV). Residues 342 to 347 (DRFGRR) are Cytoplasmic-facing. The chain crosses the membrane as a helical span at residues 348-368 (VLFIQGGIQMIIAQFILGTLI). The Extracellular segment spans residues 369–385 (AVKFGTAGVANISQGYA). Residues 386–406 (IVVVLFICLFVSAFAWSWGPL) traverse the membrane as a helical segment. Over 407–425 (GWLVPSEIFPLEIRSAAQS) the chain is Cytoplasmic. A helical membrane pass occupies residues 426–446 (VVVVFNMAFTFFIAQIFLMML). Over 447 to 450 (CRLK) the chain is Extracellular. Residues 451–471 (FGLFFFFGAMELIMTGFVLVF) traverse the membrane as a helical segment. The Cytoplasmic portion of the chain corresponds to 472-512 (LPETKGIPIEEMDRIWGEHWYWSRFVGAGRNRVMQMASTNV).

Belongs to the major facilitator superfamily. Sugar transporter (TC 2.A.1.1) family.

The protein resides in the membrane. Its function is as follows. Mediates active uptake of hexoses by sugar:proton symport. The chain is Sugar transport protein MST7 from Oryza sativa subsp. japonica (Rice).